The primary structure comprises 212 residues: Nucleoside diphosphate kinase homolog 5 (212 aa).

Positions 13–145 are NDK; the sequence is EKTLAIIKPD…EREIRFMFPE (133 aa).

It belongs to the NDK family. Component of the axonemal radial spoke complex 1 (RS1), at least composed of spoke head proteins RSPH1, RSPH3, RSPH9 and the cilia-specific component RSPH4A or sperm-specific component RSPH6A, spoke stalk proteins RSPH14, DNAJB13, DYDC1, ROPN1L and NME5, and the anchor protein IQUB. Interacts with IQUB. Specifically expressed in testis germinal cells.

The protein resides in the cell projection. The protein localises to the cilium. It is found in the cytoplasm. Its subcellular location is the cytoskeleton. It localises to the flagellum axoneme. In terms of biological role, functions as part of axonemal radial spoke complexes that play an important part in the motility of sperm and cilia. Does not seem to have nucleoside diphosphate kinase (NDPK) activity. Confers protection from cell death by BAX and alters the cellular levels of several antioxidant enzymes including GPX5. May play a role in spermiogenesis by increasing the ability of late-stage spermatids to eliminate reactive oxygen species. Exhibits a 3'-5' exonuclease activity with a preference for single-stranded DNA, suggesting roles in DNA proofreading and repair. This chain is Nucleoside diphosphate kinase homolog 5, found in Homo sapiens (Human).